Consider the following 122-residue polypeptide: Large ribosomal subunit protein uL14 (122 aa).

Belongs to the universal ribosomal protein uL14 family. In terms of assembly, part of the 50S ribosomal subunit. Forms a cluster with proteins L3 and L19. In the 70S ribosome, L14 and L19 interact and together make contacts with the 16S rRNA in bridges B5 and B8.

Binds to 23S rRNA. Forms part of two intersubunit bridges in the 70S ribosome. This Cereibacter sphaeroides (strain ATCC 17029 / ATH 2.4.9) (Rhodobacter sphaeroides) protein is Large ribosomal subunit protein uL14.